Reading from the N-terminus, the 247-residue chain is Adenosylcobinamide-GDP ribazoletransferase (247 aa).

5 helical membrane-spanning segments follow: residues 1-21, 37-57, 61-81, 109-129, and 176-196; these read MLRL…PFSF, LVGL…ALAL, VADL…HLDG, AVGV…LFAV, and VAVA…LPGI.

Belongs to the CobS family. The cofactor is Mg(2+).

The protein resides in the cell inner membrane. It catalyses the reaction alpha-ribazole + adenosylcob(III)inamide-GDP = adenosylcob(III)alamin + GMP + H(+). The enzyme catalyses alpha-ribazole 5'-phosphate + adenosylcob(III)inamide-GDP = adenosylcob(III)alamin 5'-phosphate + GMP + H(+). It functions in the pathway cofactor biosynthesis; adenosylcobalamin biosynthesis; adenosylcobalamin from cob(II)yrinate a,c-diamide: step 7/7. Joins adenosylcobinamide-GDP and alpha-ribazole to generate adenosylcobalamin (Ado-cobalamin). Also synthesizes adenosylcobalamin 5'-phosphate from adenosylcobinamide-GDP and alpha-ribazole 5'-phosphate. The protein is Adenosylcobinamide-GDP ribazoletransferase of Geotalea daltonii (strain DSM 22248 / JCM 15807 / FRC-32) (Geobacter daltonii).